Consider the following 465-residue polypeptide: RuvB-like helicase 2 (465 aa).

Residue 73-80 (GEPSTGKT) participates in ATP binding.

It belongs to the RuvB family. As to quaternary structure, forms homohexameric rings. May form a dodecamer with pont made of two stacked hexameric rings. Component of the chromatin remodeling Ino80 complex.

It is found in the nucleus. The catalysed reaction is ATP + H2O = ADP + phosphate + H(+). Its function is as follows. Acts as a transcriptional coactivator in Wg signaling. Proposed core component of the chromatin remodeling Ino80 complex which is involved in transcriptional regulation, DNA replication and probably DNA repair. This chain is RuvB-like helicase 2, found in Aedes aegypti (Yellowfever mosquito).